Consider the following 225-residue polypeptide: Small ribosomal subunit protein L51-b (225 aa).

Residues 1 to 84 (MKFPDLLRCS…QCAFISSDRF (84 aa)) constitute a mitochondrion transit peptide.

It belongs to the bacterial ribosomal protein bS1 family. As to quaternary structure, component of the mitochondrial small ribosomal subunit (mt-SSU). Mature yeast 74S mitochondrial ribosomes consist of a small (37S) and a large (54S) subunit. The 37S small subunit contains a 15S ribosomal RNA (15S mt-rRNA) and at least 32 different proteins. The 54S large subunit contains a 21S rRNA (21S mt-rRNA) and at least 45 different proteins. This subunit is mutually exclusive with mrp51/small ribosomal subunit protein bS1m.

It is found in the mitochondrion. Component of the mitochondrial ribosome (mitoribosome), a dedicated translation machinery responsible for the synthesis of mitochondrial genome-encoded proteins, including at least some of the essential transmembrane subunits of the mitochondrial respiratory chain. The mitoribosomes are attached to the mitochondrial inner membrane and translation products are cotranslationally integrated into the membrane. Functionally interacts with the 5'-UTR of mitochondrial mRNAs. Specifically plays a role in the translation of cob1/cytochrome b and cox3. Has a role in meiosis. This Schizosaccharomyces pombe (strain 972 / ATCC 24843) (Fission yeast) protein is Small ribosomal subunit protein L51-b.